Consider the following 1337-residue polypeptide: ATP-dependent helicase/nuclease subunit A (1337 aa).

Residues Phe-3–Arg-484 form the UvrD-like helicase ATP-binding domain. Ala-24–Thr-31 serves as a coordination point for ATP. In terms of domain architecture, UvrD-like helicase C-terminal spans Ala-522 to Gly-867.

Belongs to the helicase family. AddA subfamily. In terms of assembly, heterodimer of AddA and AddB/RexB. The cofactor is Mg(2+).

The catalysed reaction is Couples ATP hydrolysis with the unwinding of duplex DNA by translocating in the 3'-5' direction.. It carries out the reaction ATP + H2O = ADP + phosphate + H(+). Functionally, the heterodimer acts as both an ATP-dependent DNA helicase and an ATP-dependent, dual-direction single-stranded exonuclease. Recognizes the chi site generating a DNA molecule suitable for the initiation of homologous recombination. The AddA nuclease domain is required for chi fragment generation; this subunit has the helicase and 3' -&gt; 5' nuclease activities. The chain is ATP-dependent helicase/nuclease subunit A from Limosilactobacillus fermentum (strain NBRC 3956 / LMG 18251) (Lactobacillus fermentum).